The sequence spans 451 residues: NADH-quinone oxidoreductase subunit D (451 aa).

This sequence belongs to the complex I 49 kDa subunit family. As to quaternary structure, NDH-1 is composed of 14 different subunits. Subunits NuoB, C, D, E, F, and G constitute the peripheral sector of the complex.

The protein localises to the cell membrane. The catalysed reaction is a quinone + NADH + 5 H(+)(in) = a quinol + NAD(+) + 4 H(+)(out). Functionally, NDH-1 shuttles electrons from NADH, via FMN and iron-sulfur (Fe-S) centers, to quinones in the respiratory chain. The immediate electron acceptor for the enzyme in this species is believed to be a menaquinone. Couples the redox reaction to proton translocation (for every two electrons transferred, four hydrogen ions are translocated across the cytoplasmic membrane), and thus conserves the redox energy in a proton gradient. The protein is NADH-quinone oxidoreductase subunit D of Mycolicibacterium gilvum (strain PYR-GCK) (Mycobacterium gilvum (strain PYR-GCK)).